A 565-amino-acid chain; its full sequence is Deformed epidermal autoregulatory factor 1 homolog (565 aa).

Disordered regions lie at residues 34–62 (GGEAEEPVLSRDEDSEEDADSEAERETPR) and 162–190 (GLKGPAAPLTPGPQSPPTPLAPGQEKGGT). Over residues 169-181 (PLTPGPQSPPTPL) the composition is skewed to pro residues. Residue threonine 171 is modified to Phosphothreonine. Position 176 is a phosphoserine (serine 176). At threonine 179 the chain carries Phosphothreonine. One can recognise an SAND domain in the interval 193–273 (NWDPSVYDSE…QCLIQDGILN (81 aa)). Positions 301 to 316 (KRRKKENELPTTPVKK) match the Nuclear localization signal motif. The segment at 403-478 (IAPFPEAALP…QLKTLFEQAK (76 aa)) is interaction with LMO4. A Phosphothreonine modification is found at threonine 432. Position 448 is a phosphoserine (serine 448). Residues cysteine 504, cysteine 507, cysteine 515, cysteine 518, cysteine 524, cysteine 528, histidine 536, and cysteine 540 each contribute to the Zn(2+) site. An MYND-type zinc finger spans residues 504–540 (CVNCGREAMSECTGCHKVNYCSTFCQRKDWKDHQHIC).

In terms of assembly, homodimer. Isoform 1 and isoform 4 may form a heterodimer. Interacts with LMO2 and CLIM2. Interacts with LMO4; LMO4 blocks export from nucleus. May interact with the corepressors NCOR1 and NCRO2. Identified in a complex with the XRCC5 and XRCC6 heterodimer. Interacts (via the SAND domain) with the DNA-PK complex subunit XRCC6; the interaction is direct and may be inhibited by DNA-binding. In terms of processing, may be phosphorylated by DNA-PK complex in a DNA independent manner (in vitro). Expressed in various tissues and cells such as in peripheral mononuclear cells and hormone-secreting pituitary cells. Expression in pancreatic lymph nodes of patients with type 1 diabetes is 20 times higher than in healthy controls. Highly expressed in fetal and adult brain.

It is found in the nucleus. The protein resides in the cytoplasm. The protein localises to the secreted. In terms of biological role, transcription factor that binds to sequence with multiple copies of 5'-TTC[CG]G-3' present in its own promoter and that of the HNRPA2B1 gene. Down-regulates transcription of these genes. Binds to the retinoic acid response element (RARE) 5'-AGGGTTCACCGAAAGTTCA-3'. Activates the proenkephalin gene independently of promoter binding, probably through protein-protein interaction. When secreted, behaves as an inhibitor of cell proliferation, by arresting cells in the G0 or G1 phase. Required for neural tube closure and skeletal patterning. Regulates epithelial cell proliferation and side-branching in the mammary gland. Controls the expression of peripheral tissue antigens in pancreatic lymph nodes. Isoform 1 displays greater transcriptional activity than isoform 4. Isoform 4 may inhibit transcriptional activity of isoform 1 by interacting with isoform 1 and retaining it in the cytoplasm. Transcriptional activator of EIF4G3. This is Deformed epidermal autoregulatory factor 1 homolog (DEAF1) from Homo sapiens (Human).